We begin with the raw amino-acid sequence, 577 residues long: Protein CBFA2T1 (577 aa).

The span at 1–10 (MPDRTEKHST) shows a compositional bias: basic and acidic residues. The interval 1–87 (MPDRTEKHST…SSSSLANQQL (87 aa)) is disordered. Serine 14 carries the post-translational modification Phosphoserine. A compositionally biased stretch (polar residues) spans 42–59 (SSFTPTTLTNGTSHSPTA). Over residues 68–87 (NGFSNGPSSSSSSSLANQQL) the composition is skewed to low complexity. The TAFH domain occupies 93 to 188 (ARQLSKLKRF…NPAQYLAQHE (96 aa)). Residues 203–271 (SELLLDVNEN…LPHPTPPPPQ (69 aa)) are disordered. Over residues 211–237 (ENGKRRTPDRTKENGFDREPLHSEHPS) the composition is skewed to basic and acidic residues. Polar residues predominate over residues 244–258 (SPGQRYSPNNGLSYQ). Pro residues predominate over residues 262–271 (LPHPTPPPPQ). Positions 310 to 356 (QEEMIDHRLTDREWAEEWKHLDHLLNCIMDMVEKTRRSLTVLRRCQE) are important for oligomerization. The nervy homology region 2 (NHR2) stretch occupies residues 310-356 (QEEMIDHRLTDREWAEEWKHLDHLLNCIMDMVEKTRRSLTVLRRCQE). Positions 374-396 (DLKKGGSSSSSHSRQQSPVNPDP) are disordered. Low complexity predominate over residues 380–390 (SSSSSHSRQQS). Serine 390 bears the Phosphoserine mark. The tract at residues 416–465 (EEIWKKAEEAVNEVKRQAMTELQKAVSEAERKAHDMITTERAKMERTVAE) is nervy homology region 3 (NHR3). Residues cysteine 488, cysteine 491, cysteine 499, cysteine 502, cysteine 508, cysteine 512, histidine 520, and cysteine 524 each contribute to the Zn(2+) site. Residues 488–524 (CWNCGRKASETCSGCNTARYCGSFCQHKDWEKHHHIC) form an MYND-type zinc finger. Residues 529-577 (QAPQQGDTPAVSSSVTPSSGAGSPMDTPPAATPRSTTPGTPSTIETTPR) form a disordered region. Composition is skewed to low complexity over residues 536–553 (TPAV…GSPM) and 560–577 (TPRS…TTPR).

The protein belongs to the CBFA2T family. Homotetramer. Heterotetramer with CBFA2T2 and CBFA2T3. Interacts with TCF12, SIN3A, HDAC1, HDAC2, HDAC3, NCOR1 and NCOR2. Interacts with ATN1 (via its N-terminus); the interaction enhances the transcriptional repression.

Its subcellular location is the nucleus. In terms of biological role, transcriptional corepressor which facilitates transcriptional repression via its association with DNA-binding transcription factors and recruitment of other corepressors and histone-modifying enzymes. Can repress the expression of MMP7 in a ZBTB33-dependent manner. Can repress transactivation mediated by TCF12. Acts as a negative regulator of adipogenesis. This chain is Protein CBFA2T1 (Runx1t1), found in Mus musculus (Mouse).